A 272-amino-acid chain; its full sequence is MLIYGKDIREQIKERVRQSAEEVKMGLAIIRVGDDPSSMAYVRGIRKFAEETGVKVEIVNLPDAVGERELLKTIGDLNNSSEITGIMLQTPLPASLNASHLVNAIDFDKDVEGIHNYNLGKLISKEEGVRPCTPKAVISMLKAHDILIEGQKVTIIGRSMTVGSPLALMMTAENATVTVCHTRTRNLKEEALRADILVAAVGKREFVTADMVHKDMVVIDVGINFDENGKMLGDVHEEARNHCRLASAVPGGIGVITVAELFDNLRILSQKA.

NADP(+)-binding positions include 157–159, Thr-182, and Ile-223; that span reads GRS.

Belongs to the tetrahydrofolate dehydrogenase/cyclohydrolase family. Homodimer.

It carries out the reaction (6R)-5,10-methylene-5,6,7,8-tetrahydrofolate + NADP(+) = (6R)-5,10-methenyltetrahydrofolate + NADPH. It catalyses the reaction (6R)-5,10-methenyltetrahydrofolate + H2O = (6R)-10-formyltetrahydrofolate + H(+). The protein operates within one-carbon metabolism; tetrahydrofolate interconversion. Functionally, catalyzes the oxidation of 5,10-methylenetetrahydrofolate to 5,10-methenyltetrahydrofolate and then the hydrolysis of 5,10-methenyltetrahydrofolate to 10-formyltetrahydrofolate. This is Bifunctional protein FolD 2 from Syntrophomonas wolfei subsp. wolfei (strain DSM 2245B / Goettingen).